Consider the following 274-residue polypeptide: MAHVKNHDYQILPPSIWPFFGAIGAFVMLTGAVAWMKGITFFGLPVEGPWMFLIGLVGVLYVMFGWWADVVNEGETGEHTPVVRIGLQYGFILFIMSEVMFFVAWFWAFIKNALYPMGPDSPIKDGVWPPEGIVTFDPWHLPLINTLILLLSGVAVTWAHHAFVLEGDRKTTINGLIVAVILGVCFTGLQAYEYSHAAFGLADTVYAGAFYMATGFHGAHVIIGTIFLFVCLIRLLKGQMTQKQHVGFEAAAWYWHFVDVVWLFLFVVIYIWGR.

Residues 2–15 (AHVKNHDYQILPPS) lie on the Cytoplasmic side of the membrane. The helical transmembrane segment at 16 to 36 (IWPFFGAIGAFVMLTGAVAWM) threads the bilayer. Topologically, residues 37 to 48 (KGITFFGLPVEG) are periplasmic. Residues 49–77 (PWMFLIGLVGVLYVMFGWWADVVNEGETG) traverse the membrane as a helical segment. The Cytoplasmic segment spans residues 78–79 (EH). The helical transmembrane segment at 80–115 (TPVVRIGLQYGFILFIMSEVMFFVAWFWAFIKNALY) threads the bilayer. Over 116–139 (PMGPDSPIKDGVWPPEGIVTFDPW) the chain is Periplasmic. Residues 140-166 (HLPLINTLILLLSGVAVTWAHHAFVLE) form a helical membrane-spanning segment. The Cytoplasmic segment spans residues 167 to 168 (GD). Residues 169 to 197 (RKTTINGLIVAVILGVCFTGLQAYEYSHA) traverse the membrane as a helical segment. Residues 198-203 (AFGLAD) lie on the Periplasmic side of the membrane. The helical transmembrane segment at 204–237 (TVYAGAFYMATGFHGAHVIIGTIFLFVCLIRLLK) threads the bilayer. Over 238–244 (GQMTQKQ) the chain is Cytoplasmic. Residues 245 to 274 (HVGFEAAAWYWHFVDVVWLFLFVVIYIWGR) form a helical membrane-spanning segment.

It belongs to the cytochrome c oxidase subunit 3 family.

It localises to the cell inner membrane. The catalysed reaction is 4 Fe(II)-[cytochrome c] + O2 + 8 H(+)(in) = 4 Fe(III)-[cytochrome c] + 2 H2O + 4 H(+)(out). This is Cytochrome c oxidase subunit 3 (ctaE) from Paracoccus denitrificans.